The sequence spans 401 residues: 8-amino-7-oxononanoate synthase (401 aa).

R24 is a binding site for substrate. 111 to 112 (GF) is a binding site for pyridoxal 5'-phosphate. Residue H137 participates in substrate binding. S183, H211, and T240 together coordinate pyridoxal 5'-phosphate. An N6-(pyridoxal phosphate)lysine modification is found at K243. Residue T357 participates in substrate binding.

This sequence belongs to the class-II pyridoxal-phosphate-dependent aminotransferase family. BioF subfamily. Homodimer. Requires pyridoxal 5'-phosphate as cofactor.

It carries out the reaction 6-carboxyhexanoyl-[ACP] + L-alanine + H(+) = (8S)-8-amino-7-oxononanoate + holo-[ACP] + CO2. The protein operates within cofactor biosynthesis; biotin biosynthesis. In terms of biological role, catalyzes the decarboxylative condensation of pimeloyl-[acyl-carrier protein] and L-alanine to produce 8-amino-7-oxononanoate (AON), [acyl-carrier protein], and carbon dioxide. In Xanthomonas campestris pv. campestris (strain 8004), this protein is 8-amino-7-oxononanoate synthase.